The primary structure comprises 347 residues: MDFELEPTLESIVQQDTLKWIFVGGKGGVGKTTTSSSIAVQLALNHPNDQFLLISTDPAHNLSDAFCQKFGKDARKVDGLSNLSCMEIDPEAAMSDLQQQAQQYNNDPNDPLKSMMNDMTGSIPGIDEALSFMEVLKHIKSQKVDENDDKDKISYRTIIFDTAPTGHTLRFLQLPSTLQKLLSKFQALSGKFGPMMSMLGGGNQQEMFDKLNEVQKNVTEVNEQFTNPDLTTFVCVCISEFLSLYETERMIQELMSYNMDVNSIVVNQLLFADDDEKPCKRCVSRWKMQKKYLDQMAELYEDYHLVKMPLLGTEIRGVENLKKFSKFLLTPYDPKVNGDLVTSLEEK.

26–33 (KGGVGKTT) is an ATP binding site. Residue Asp57 is part of the active site. Positions 240 and 267 each coordinate ATP. Cys279 and Cys282 together coordinate Zn(2+).

This sequence belongs to the arsA ATPase family. Homodimer. Component of the Golgi to ER traffic (GET) complex, which is composed of GET1, GET2 and GET3. Within the complex, GET1 and GET2 form a heterotetramer which is stabilized by phosphatidylinositol binding and which binds to the GET3 homodimer. Interacts with the chloride channel protein GEF1.

It is found in the cytoplasm. The protein resides in the endoplasmic reticulum. Its subcellular location is the golgi apparatus. Its function is as follows. ATPase required for the post-translational delivery of tail-anchored (TA) proteins to the endoplasmic reticulum. Recognizes and selectively binds the transmembrane domain of TA proteins in the cytosol. This complex then targets to the endoplasmic reticulum by membrane-bound receptors GET1 and GET2, where the tail-anchored protein is released for insertion. This process is regulated by ATP binding and hydrolysis. ATP binding drives the homodimer towards the closed dimer state, facilitating recognition of newly synthesized TA membrane proteins. ATP hydrolysis is required for insertion. Subsequently, the homodimer reverts towards the open dimer state, lowering its affinity for the GET1-GET2 receptor, and returning it to the cytosol to initiate a new round of targeting. Cooperates with the HDEL receptor ERD2 to mediate the ATP-dependent retrieval of resident ER proteins that contain a C-terminal H-D-E-L retention signal from the Golgi to the ER. Involved in low-level resistance to the oxyanions arsenite and arsenate, and in heat tolerance. In Scheffersomyces stipitis (strain ATCC 58785 / CBS 6054 / NBRC 10063 / NRRL Y-11545) (Yeast), this protein is ATPase GET3.